We begin with the raw amino-acid sequence, 348 residues long: Glycerol-1-phosphate dehydrogenase [NAD(P)+] (348 aa).

NAD(+) is bound by residues 94–98 and threonine 116; that span reads GKVID. Residue aspartate 121 coordinates substrate. Serine 125 is an NAD(+) binding site. Residue aspartate 168 coordinates substrate. Zn(2+) contacts are provided by aspartate 168 and histidine 248. Substrate is bound at residue histidine 252. Histidine 264 lines the Zn(2+) pocket.

The protein belongs to the glycerol-1-phosphate dehydrogenase family. In terms of assembly, homooctamer. The cofactor is Zn(2+).

It localises to the cytoplasm. The catalysed reaction is sn-glycerol 1-phosphate + NAD(+) = dihydroxyacetone phosphate + NADH + H(+). It catalyses the reaction sn-glycerol 1-phosphate + NADP(+) = dihydroxyacetone phosphate + NADPH + H(+). It functions in the pathway membrane lipid metabolism; glycerophospholipid metabolism. Its function is as follows. Catalyzes the NAD(P)H-dependent reduction of dihydroxyacetonephosphate (DHAP or glycerone phosphate) to glycerol 1-phosphate (G1P). The G1P thus generated is used as the glycerophosphate backbone of phospholipids in the cellular membranes of Archaea. This is Glycerol-1-phosphate dehydrogenase [NAD(P)+] from Methanosphaera stadtmanae (strain ATCC 43021 / DSM 3091 / JCM 11832 / MCB-3).